Consider the following 1229-residue polypeptide: DNA-directed RNA polymerase subunit beta (1229 aa).

It belongs to the RNA polymerase beta chain family. As to quaternary structure, the RNAP catalytic core consists of 2 alpha, 1 beta, 1 beta' and 1 omega subunit. When a sigma factor is associated with the core the holoenzyme is formed, which can initiate transcription.

The enzyme catalyses RNA(n) + a ribonucleoside 5'-triphosphate = RNA(n+1) + diphosphate. Functionally, DNA-dependent RNA polymerase catalyzes the transcription of DNA into RNA using the four ribonucleoside triphosphates as substrates. The protein is DNA-directed RNA polymerase subunit beta of Roseiflexus sp. (strain RS-1).